We begin with the raw amino-acid sequence, 155 residues long: Large ribosomal subunit protein eL24 (155 aa).

The disordered stretch occupies residues Leu-87–Arg-155. The span at Leu-89–Lys-129 shows a compositional bias: basic and acidic residues. Residues Ala-130 to Ala-143 are compositionally biased toward low complexity.

This sequence belongs to the eukaryotic ribosomal protein eL24 family. In terms of assembly, component of the large ribosomal subunit. Mature ribosomes consist of a small (40S) and a large (60S) subunit. The 40S subunit contains about 32 different proteins and 1 molecule of RNA (18S). The 60S subunit contains 45 different proteins and 3 molecules of RNA (25S, 5.8S and 5S).

It is found in the cytoplasm. Component of the ribosome, a large ribonucleoprotein complex responsible for the synthesis of proteins in the cell. The small ribosomal subunit (SSU) binds messenger RNAs (mRNAs) and translates the encoded message by selecting cognate aminoacyl-transfer RNA (tRNA) molecules. The large subunit (LSU) contains the ribosomal catalytic site termed the peptidyl transferase center (PTC), which catalyzes the formation of peptide bonds, thereby polymerizing the amino acids delivered by tRNAs into a polypeptide chain. The nascent polypeptides leave the ribosome through a tunnel in the LSU and interact with protein factors that function in enzymatic processing, targeting, and the membrane insertion of nascent chains at the exit of the ribosomal tunnel. The protein is Large ribosomal subunit protein eL24 of Candida albicans (strain SC5314 / ATCC MYA-2876) (Yeast).